A 494-amino-acid chain; its full sequence is Glutamyl-tRNA(Gln) amidotransferase subunit A (494 aa).

Catalysis depends on charge relay system residues K78 and S158. The Acyl-ester intermediate role is filled by S182.

Belongs to the amidase family. GatA subfamily. Heterotrimer of A, B and C subunits.

It carries out the reaction L-glutamyl-tRNA(Gln) + L-glutamine + ATP + H2O = L-glutaminyl-tRNA(Gln) + L-glutamate + ADP + phosphate + H(+). In terms of biological role, allows the formation of correctly charged Gln-tRNA(Gln) through the transamidation of misacylated Glu-tRNA(Gln) in organisms which lack glutaminyl-tRNA synthetase. The reaction takes place in the presence of glutamine and ATP through an activated gamma-phospho-Glu-tRNA(Gln). The sequence is that of Glutamyl-tRNA(Gln) amidotransferase subunit A from Jannaschia sp. (strain CCS1).